The primary structure comprises 484 residues: Pyruvate kinase (484 aa).

Residue R33 coordinates substrate. Residues N35, S37, D67, and T68 each coordinate K(+). 35-38 (NFSH) is a binding site for ATP. Residues R74 and K155 each coordinate ATP. E221 is a Mg(2+) binding site. 3 residues coordinate substrate: G244, D245, and T277. Mg(2+) is bound at residue D245.

It belongs to the pyruvate kinase family. In terms of assembly, homotetramer. Mg(2+) serves as cofactor. The cofactor is K(+).

The enzyme catalyses pyruvate + ATP = phosphoenolpyruvate + ADP + H(+). Its pathway is carbohydrate degradation; glycolysis; pyruvate from D-glyceraldehyde 3-phosphate: step 5/5. This Chlamydia pneumoniae (Chlamydophila pneumoniae) protein is Pyruvate kinase (pyk).